The following is a 142-amino-acid chain: Cell division protein SepF (142 aa).

This sequence belongs to the SepF family. Homodimer. Interacts with FtsZ.

It localises to the cytoplasm. Functionally, cell division protein that is part of the divisome complex and is recruited early to the Z-ring. Probably stimulates Z-ring formation, perhaps through the cross-linking of FtsZ protofilaments. Its function overlaps with FtsA. This Geobacillus kaustophilus (strain HTA426) protein is Cell division protein SepF.